The following is a 500-amino-acid chain: Probable malate:quinone oxidoreductase (500 aa).

The protein belongs to the MQO family. The cofactor is FAD.

It carries out the reaction (S)-malate + a quinone = a quinol + oxaloacetate. Its pathway is carbohydrate metabolism; tricarboxylic acid cycle; oxaloacetate from (S)-malate (quinone route): step 1/1. The protein is Probable malate:quinone oxidoreductase of Bacillus cereus (strain B4264).